The following is a 305-amino-acid chain: tRNA pseudouridine synthase B (305 aa).

Aspartate 41 (nucleophile) is an active-site residue.

This sequence belongs to the pseudouridine synthase TruB family. Type 1 subfamily.

It carries out the reaction uridine(55) in tRNA = pseudouridine(55) in tRNA. Its function is as follows. Responsible for synthesis of pseudouridine from uracil-55 in the psi GC loop of transfer RNAs. This is tRNA pseudouridine synthase B from Prochlorococcus marinus (strain MIT 9515).